Here is a 377-residue protein sequence, read N- to C-terminus: Phosphoserine aminotransferase (377 aa).

Arg43 is an L-glutamate binding site. Residues Trp105, Thr164, Asp189, and Gln212 each contribute to the pyridoxal 5'-phosphate site. Lys213 bears the N6-(pyridoxal phosphate)lysine mark. A pyridoxal 5'-phosphate-binding site is contributed by 254–255 (NT).

Belongs to the class-V pyridoxal-phosphate-dependent aminotransferase family. SerC subfamily. Homodimer. Pyridoxal 5'-phosphate is required as a cofactor.

It is found in the cytoplasm. The enzyme catalyses O-phospho-L-serine + 2-oxoglutarate = 3-phosphooxypyruvate + L-glutamate. It carries out the reaction 4-(phosphooxy)-L-threonine + 2-oxoglutarate = (R)-3-hydroxy-2-oxo-4-phosphooxybutanoate + L-glutamate. It functions in the pathway amino-acid biosynthesis; L-serine biosynthesis; L-serine from 3-phospho-D-glycerate: step 2/3. It participates in cofactor biosynthesis; pyridoxine 5'-phosphate biosynthesis; pyridoxine 5'-phosphate from D-erythrose 4-phosphate: step 3/5. Its function is as follows. Catalyzes the reversible conversion of 3-phosphohydroxypyruvate to phosphoserine and of 3-hydroxy-2-oxo-4-phosphonooxybutanoate to phosphohydroxythreonine. This is Phosphoserine aminotransferase from Bordetella bronchiseptica (strain ATCC BAA-588 / NCTC 13252 / RB50) (Alcaligenes bronchisepticus).